A 649-amino-acid polypeptide reads, in one-letter code: Outer dense fiber protein 2 (649 aa).

Residues 1 to 65 (MKNRSPSPPL…TKVPWIPPGK (65 aa)) are disordered. 3 coiled-coil regions span residues 137 to 219 (QKRE…AETD), 247 to 426 (DINL…LEML), and 464 to 649 (EVAV…NCAL). A disordered region spans residues 339-358 (SEVSKSIESTKAHLQGQLRT).

It belongs to the ODF2 family. In terms of assembly, self-associates. Associates with microtubules and forms a fibrillar structure partially linked to the microtubule network.

It localises to the cytoplasm. Its subcellular location is the cytoskeleton. It is found in the microtubule organizing center. The protein localises to the centrosome. The protein resides in the cell projection. It localises to the cilium. Its subcellular location is the centriole. It is found in the spindle pole. The protein localises to the flagellum. In terms of biological role, seems to be a major form of sperm tail outer dense fibers. This chain is Outer dense fiber protein 2 (odf2), found in Xenopus laevis (African clawed frog).